Reading from the N-terminus, the 139-residue chain is Mitochondrial intermembrane space import and assembly protein 40-A (139 aa).

Cystine bridges form between cysteine 53–cysteine 55, cysteine 64–cysteine 97, and cysteine 74–cysteine 87. The CHCH domain maps to 61–105 (SGPCGEQFKSAFSCFHYSQEEIKGSDCLDQFRGMQECMQKYPDLY). 2 short sequence motifs (cx9C motif) span residues 64 to 74 (CGEQFKSAFSC) and 87 to 97 (CLDQFRGMQEC). The tract at residues 103-139 (DLYPQEDDEEEAEKEKQNKEAEPSVTQSSDTKEESSS) is disordered. Positions 115 to 124 (EKEKQNKEAE) are enriched in basic and acidic residues.

In terms of assembly, monomer. Can form homooligomers.

It localises to the mitochondrion intermembrane space. In terms of biological role, central component of a redox-sensitive mitochondrial intermembrane space import machinery which is required for the biogenesis of respiratory chain complexes. Functions as chaperone and catalyzes the formation of disulfide bonds in substrate proteins, such as COX17 or MICU1. Required for the import and folding of small cysteine-containing proteins (small Tim) in the mitochondrial intermembrane space (IMS). Precursor proteins to be imported into the IMS are translocated in their reduced form into the mitochondria. In Xenopus laevis (African clawed frog), this protein is Mitochondrial intermembrane space import and assembly protein 40-A (chchd4-a).